A 485-amino-acid polypeptide reads, in one-letter code: GPI-anchored wall transfer protein 1 (485 aa).

2 helical membrane passes run Leu48–Tyr68 and Ser73–Val93. An N-linked (GlcNAc...) asparagine glycan is attached at Asn103. The next 2 helical transmembrane spans lie at Tyr123–Phe143 and Thr152–Ala172. The N-linked (GlcNAc...) asparagine glycan is linked to Asn180. A run of 6 helical transmembrane segments spans residues Phe200–Val217, Tyr229–Leu249, Phe259–Leu279, Ile300–Val320, Leu359–Phe379, and Phe390–Ile410. Residue Asn417 is glycosylated (N-linked (GlcNAc...) asparagine). A run of 2 helical transmembrane segments spans residues Leu431–Leu451 and Met457–Asp477.

Belongs to the PIGW family.

It is found in the endoplasmic reticulum membrane. It participates in glycolipid biosynthesis; glycosylphosphatidylinositol-anchor biosynthesis. Functionally, probable acetyltransferase, which acetylates the inositol ring of phosphatidylinositol during biosynthesis of GPI-anchor. In Candida albicans (strain SC5314 / ATCC MYA-2876) (Yeast), this protein is GPI-anchored wall transfer protein 1 (GWT1).